The primary structure comprises 287 residues: ATP synthase gamma chain (287 aa).

The protein belongs to the ATPase gamma chain family. F-type ATPases have 2 components, CF(1) - the catalytic core - and CF(0) - the membrane proton channel. CF(1) has five subunits: alpha(3), beta(3), gamma(1), delta(1), epsilon(1). CF(0) has three main subunits: a, b and c.

It is found in the cell inner membrane. In terms of biological role, produces ATP from ADP in the presence of a proton gradient across the membrane. The gamma chain is believed to be important in regulating ATPase activity and the flow of protons through the CF(0) complex. The polypeptide is ATP synthase gamma chain (Methylococcus capsulatus (strain ATCC 33009 / NCIMB 11132 / Bath)).